The chain runs to 595 residues: MTANGLLQICGYLGVLLALAKPLGSYMAAVYEGRSATVRVLASVERFIYRITGIDPEAEMRWTGYASAFLVFNLLGVLAVYALQRCQGFLPLNPQGLPAVAPDSAFNTAISFATNTNWQGYGGEMTLSHLTQMLGLTVQNFVSAASGMAVLVALIRGFVRRNADTLGNFWVDLTRSILHILLPLSFLLALLLIGQGVVQTFEPYRNVTLVEATGYDRPKQDEGGHPLVDADGNPVTEHVTVSEQTLALGPAASQVAIKQLGTNGGGFFSVNSAHPFENPTPFSNFLEMLAILVISGALCHTFGVMVGDTRQGWVILAAMTLIFVPLLFVTVLCEQGGNPAFAALGVDPAGGNMEGKETRFGIVNSALWATATTAASNGSVNAMHDSFTPLGGLVPMWLMQLGEVVFGGVGSGLYGMLVFAIVAVFVAGLMIGRTPEYLGKKIEAYEMKMAAIVILVPPLMVLGGTAVAVMLDAGKSSVFNPGAHGFSEILYAFSSAGNNNGSAFAGLAANTPFYNLMLGLAMWFSRYWLAVPVLAIAGALAAKNYVPPGAGTLPTHTPMFVGLLVGVVIIVGALTFIPALALGPIVEHLMMIGAR.

10 helical membrane passes run 9–29 (ICGYLGVLLALAKPLGSYMAA), 63–83 (TGYASAFLVFNLLGVLAVYAL), 135–155 (GLTVQNFVSAASGMAVLVALI), 177–197 (ILHILLPLSFLLALLLIGQGV), 285–305 (FLEMLAILVISGALCHTFGVM), 312–332 (GWVILAAMTLIFVPLLFVTVL), 412–432 (GLYGMLVFAIVAVFVAGLMIG), 451–471 (AIVILVPPLMVLGGTAVAVML), 516–536 (LMLGLAMWFSRYWLAVPVLAI), and 560–580 (FVGLLVGVVIIVGALTFIPAL).

It belongs to the KdpA family. As to quaternary structure, the system is composed of three essential subunits: KdpA, KdpB and KdpC.

Its subcellular location is the cell inner membrane. Functionally, part of the high-affinity ATP-driven potassium transport (or Kdp) system, which catalyzes the hydrolysis of ATP coupled with the electrogenic transport of potassium into the cytoplasm. This subunit binds the periplasmic potassium ions and delivers the ions to the membrane domain of KdpB through an intramembrane tunnel. In Methylococcus capsulatus (strain ATCC 33009 / NCIMB 11132 / Bath), this protein is Potassium-transporting ATPase potassium-binding subunit.